We begin with the raw amino-acid sequence, 290 residues long: HTH-type transcriptional activator RhaR (290 aa).

Positions 179–277 constitute an HTH araC/xylS-type domain; sequence DLIMSALQQS…GMTPRDYRQR (99 aa). 2 consecutive DNA-binding regions (H-T-H motif) follow at residues 196–217 and 244–267; these read ADFC…RQQT and ISDI…TREA.

As to quaternary structure, binds DNA as a dimer.

Its subcellular location is the cytoplasm. Activates expression of the rhaSR operon in response to L-rhamnose. The chain is HTH-type transcriptional activator RhaR from Yersinia pseudotuberculosis serotype O:1b (strain IP 31758).